Consider the following 401-residue polypeptide: Ufm1-specific protease 2 (401 aa).

Active-site residues include cysteine 234, aspartate 358, and histidine 360.

Belongs to the peptidase C78 family.

It localises to the endoplasmic reticulum. The protein localises to the cytoplasm. It is found in the nucleus. Functionally, thiol-dependent isopeptidase that specifically cleaves UFM1, a ubiquitin-like modifier protein, from conjugated proteins. While it is also able to mediate the processing of UFM1 precursors, a prerequisite for conjugation reactions, ufsp2 mainly acts as a protein deUFMylase that mediates deconjugation of UFM1 from target proteins. This Danio rerio (Zebrafish) protein is Ufm1-specific protease 2.